A 283-amino-acid chain; its full sequence is Ribosomal RNA small subunit methyltransferase I (283 aa).

The protein belongs to the methyltransferase superfamily. RsmI family.

Its subcellular location is the cytoplasm. The enzyme catalyses cytidine(1402) in 16S rRNA + S-adenosyl-L-methionine = 2'-O-methylcytidine(1402) in 16S rRNA + S-adenosyl-L-homocysteine + H(+). In terms of biological role, catalyzes the 2'-O-methylation of the ribose of cytidine 1402 (C1402) in 16S rRNA. This chain is Ribosomal RNA small subunit methyltransferase I, found in Haemophilus influenzae (strain ATCC 51907 / DSM 11121 / KW20 / Rd).